A 467-amino-acid chain; its full sequence is Ribulose bisphosphate carboxylase large chain (467 aa).

Residues Xaa-106 and Thr-156 each contribute to the substrate site. Lys-158 functions as the Proton acceptor in the catalytic mechanism. Substrate is bound at residue Lys-160. Positions 184, 186, and 187 each coordinate Mg(2+). At Lys-184 the chain carries N6-carboxylysine. Residue His-276 is the Proton acceptor of the active site. Residues Arg-277, His-309, and Ser-361 each contribute to the substrate site.

It belongs to the RuBisCO large chain family. Type I subfamily. As to quaternary structure, heterohexadecamer of 8 large chains and 8 small chains. It depends on Mg(2+) as a cofactor.

It localises to the plastid. Its subcellular location is the chloroplast. The enzyme catalyses 2 (2R)-3-phosphoglycerate + 2 H(+) = D-ribulose 1,5-bisphosphate + CO2 + H2O. It carries out the reaction D-ribulose 1,5-bisphosphate + O2 = 2-phosphoglycolate + (2R)-3-phosphoglycerate + 2 H(+). In terms of biological role, ruBisCO catalyzes two reactions: the carboxylation of D-ribulose 1,5-bisphosphate, the primary event in carbon dioxide fixation, as well as the oxidative fragmentation of the pentose substrate in the photorespiration process. Both reactions occur simultaneously and in competition at the same active site. This is Ribulose bisphosphate carboxylase large chain (rbcL) from Chondrus crispus (Carrageen Irish moss).